Here is a 239-residue protein sequence, read N- to C-terminus: Probable phosphatase Csac_1188 (239 aa).

Zn(2+) contacts are provided by H8, H10, H16, H41, E74, H102, H132, D192, and H194.

Belongs to the PHP family. The cofactor is Zn(2+).

This Caldicellulosiruptor saccharolyticus (strain ATCC 43494 / DSM 8903 / Tp8T 6331) protein is Probable phosphatase Csac_1188.